A 335-amino-acid chain; its full sequence is MELSCPGSRCPVQEQRARWERKRACTARELLETERRYQEQLGLVATYFLGILKAKGTLRPPERQALFGSWELIYGASQELLPYLEGGCWGQGLEGFCRHLELYNQFAANSERSQTTLQEQLKKNKGFRRFVRLQEGRPEFGGLQLQDLLPLPLQRLQQYENLVVALAENTGPNSPDHQQLTRAARLISETAQRVHTIGQKQKNDQHLRRVQALLSGRQAKGLTSGRWFLRQGWLLVVPPHGEPRPRMFFLFTDVLLMAKPRPPLHLLRSGTFACKALYPMAQCHLSRVFGHSGGPCGGLLSLSFPHEKLLLMSTDQEELSRWYHSLTWAISSQKN.

Residues 22–197 (KRACTARELL…SETAQRVHTI (176 aa)) form the DH domain. Positions 227–331 (WFLRQGWLLV…WYHSLTWAIS (105 aa)) constitute a PH domain.

Strongly expressed in hepatocellular carcinoma (HCC) compared with their non-cancerous counterparts.

It localises to the cell membrane. In terms of biological role, promotes cell proliferation. The polypeptide is Rho guanine nucleotide exchange factor 39 (ARHGEF39) (Homo sapiens (Human)).